The following is a 478-amino-acid chain: Allene oxide synthase 2 (478 aa).

Heme b contacts are provided by Lys-88, His-119, and Lys-123. A (13S)-hydroperoxy-(9Z,11E,15Z)-octadecatrienoate-binding site is contributed by Asn-278. Positions 427 and 429 each coordinate heme b.

This sequence belongs to the cytochrome P450 family. It depends on heme b as a cofactor. In terms of tissue distribution, weakly expressed in roots, shoots, leaves and flowers.

It carries out the reaction (13S)-hydroperoxy-(9Z,11E,15Z)-octadecatrienoate = (9Z,13S,15Z)-12,13-epoxyoctadeca-9,11,15-trienoate + H2O. Its pathway is lipid metabolism; oxylipin biosynthesis. Involved in the biosynthesis of jasmonic acid, a growth regulator that is implicated also as a signaling molecule in plant defense. Converts 13-hydroperoxylinolenic acid to 12,13-epoxylinolenic acid. This chain is Allene oxide synthase 2 (CYP74A2), found in Oryza sativa subsp. japonica (Rice).